The primary structure comprises 177 residues: Translation initiation factor IF-3 (177 aa).

The protein belongs to the IF-3 family. In terms of assembly, monomer.

It localises to the cytoplasm. Functionally, IF-3 binds to the 30S ribosomal subunit and shifts the equilibrium between 70S ribosomes and their 50S and 30S subunits in favor of the free subunits, thus enhancing the availability of 30S subunits on which protein synthesis initiation begins. In Nostoc sp. (strain PCC 7120 / SAG 25.82 / UTEX 2576), this protein is Translation initiation factor IF-3.